The chain runs to 625 residues: Probable receptor-like protein kinase At1g11050 (625 aa).

An N-terminal signal peptide occupies residues M1–A20. The Extracellular portion of the chain corresponds to Q21–T227. 4 N-linked (GlcNAc...) asparagine glycosylation sites follow: N40, N106, N121, and N177. Residues V228–I248 form a helical membrane-spanning segment. The Cytoplasmic segment spans residues C249–R625. Residues F295 to L555 enclose the Protein kinase domain. ATP-binding positions include I301–V309 and K323. D426 functions as the Proton acceptor in the catalytic mechanism.

This sequence belongs to the protein kinase superfamily. Ser/Thr protein kinase family.

Its subcellular location is the membrane. It carries out the reaction L-seryl-[protein] + ATP = O-phospho-L-seryl-[protein] + ADP + H(+). The catalysed reaction is L-threonyl-[protein] + ATP = O-phospho-L-threonyl-[protein] + ADP + H(+). In Arabidopsis thaliana (Mouse-ear cress), this protein is Probable receptor-like protein kinase At1g11050.